The chain runs to 267 residues: Elsinochrome reductase 1 (267 aa).

NADP(+) is bound by residues Ile26, Asp72, Asn99, and Arg132. Ser149 (proton donor) is an active-site residue. Residues Tyr163, Lys167, Ile196, and Thr198 each coordinate NADP(+). Tyr163 (proton acceptor) is an active-site residue. Lys167 serves as the catalytic Lowers pKa of active site Tyr.

Belongs to the short-chain dehydrogenases/reductases (SDR) family.

Reductase; part of the gene cluster that mediates the biosynthesis of elsinochromes, pigments consisting of at least four interconvertible tautomers (A, B, C and D) that have a core phenolic quinone to which various side chains are attached and which play an important role in fungal pathogenesis. The non-reducing polyketide synthase PKS1 was proposed to iteratively catalyze decarboxylation between acetyl-CoA and malonyl-CoA subunits for polyketide chain elongation. The released polyketide undergoes cyclization to form an aromatic ring, and proceeds via serial modification steps to produce the heptaketide back- bone of elsinochrome. As elsinochrome has a symmetrical structure, two identical heptaketides are fused to form a core 1,2-dihydrobenzo-perylene ring structure, which can then be successively modified to produce the various derivatives of elsinochrome. Some of these reactions may be cooperatively carried out, at least in part, by the products of RDT1, OXR1 and PKS1. PRF1, embedded within the elsinochrome cluster possibly functions to stabilize some of the biosynthetic enzymes required for elsinochrome production. As prefoldin is a hexamer containing 2 a and 4 b subunits, additional prefoldin subunits, whose coding genes may not immediately link to the elsinochrome biosynthetic gene cluster, are required to fulfill the chaperone function. In addition, no methyltransferase-coding gene exists within the biosynthetic gene cluster, even though elsinochrome has four methyl groups at positions C3, C7, C8 and C12. Apparently, the identified gene cluster does not contain the entire entourage of genes responsible for elsinochrome biosynthesis. Once elsinochrome is synthesized, it must be exported outside the fungal cells, which is probably accomplished by the ECT1 transporter, to avoid toxicity. The sequence is that of Elsinochrome reductase 1 from Elsinoe fawcettii (Citrus scab fungus).